The sequence spans 205 residues: Guanylate kinase (205 aa).

Residues 5–183 (GTLYTVSAPS…ALTEFRSIVV (179 aa)) enclose the Guanylate kinase-like domain. Residue 12–19 (APSGAGKT) coordinates ATP.

The protein belongs to the guanylate kinase family.

The protein localises to the cytoplasm. The catalysed reaction is GMP + ATP = GDP + ADP. In terms of biological role, essential for recycling GMP and indirectly, cGMP. The chain is Guanylate kinase from Saccharophagus degradans (strain 2-40 / ATCC 43961 / DSM 17024).